Here is a 338-residue protein sequence, read N- to C-terminus: Phenylalanine--tRNA ligase alpha subunit (338 aa).

The disordered stretch occupies residues 71 to 101 (QFEEKRSSLSQQTSSSDTYQSLPDLTLPGRQ). The span at 78–92 (SLSQQTSSSDTYQSL) shows a compositional bias: low complexity. Position 253 (Glu253) interacts with Mg(2+).

The protein belongs to the class-II aminoacyl-tRNA synthetase family. Phe-tRNA synthetase alpha subunit type 1 subfamily. As to quaternary structure, tetramer of two alpha and two beta subunits. It depends on Mg(2+) as a cofactor.

Its subcellular location is the cytoplasm. It carries out the reaction tRNA(Phe) + L-phenylalanine + ATP = L-phenylalanyl-tRNA(Phe) + AMP + diphosphate + H(+). The protein is Phenylalanine--tRNA ligase alpha subunit of Desulfotalea psychrophila (strain LSv54 / DSM 12343).